The following is a 211-amino-acid chain: Histidine biosynthesis bifunctional protein HisIE (211 aa).

A phosphoribosyl-AMP cyclohydrolase region spans residues 1-118 (MNVDDLTFDD…IYGASDRFGI (118 aa)). The phosphoribosyl-ATP pyrophosphohydrolase stretch occupies residues 119 to 211 (IATLEALIAE…LEERHRPKEE (93 aa)).

This sequence in the N-terminal section; belongs to the PRA-CH family. In the C-terminal section; belongs to the PRA-PH family.

It is found in the cytoplasm. The catalysed reaction is 1-(5-phospho-beta-D-ribosyl)-ATP + H2O = 1-(5-phospho-beta-D-ribosyl)-5'-AMP + diphosphate + H(+). The enzyme catalyses 1-(5-phospho-beta-D-ribosyl)-5'-AMP + H2O = 1-(5-phospho-beta-D-ribosyl)-5-[(5-phospho-beta-D-ribosylamino)methylideneamino]imidazole-4-carboxamide. The protein operates within amino-acid biosynthesis; L-histidine biosynthesis; L-histidine from 5-phospho-alpha-D-ribose 1-diphosphate: step 2/9. It participates in amino-acid biosynthesis; L-histidine biosynthesis; L-histidine from 5-phospho-alpha-D-ribose 1-diphosphate: step 3/9. In Halalkalibacterium halodurans (strain ATCC BAA-125 / DSM 18197 / FERM 7344 / JCM 9153 / C-125) (Bacillus halodurans), this protein is Histidine biosynthesis bifunctional protein HisIE (hisI).